The chain runs to 150 residues: Putative pre-16S rRNA nuclease (150 aa).

It belongs to the YqgF nuclease family.

The protein localises to the cytoplasm. In terms of biological role, could be a nuclease involved in processing of the 5'-end of pre-16S rRNA. In Chlamydia abortus (strain DSM 27085 / S26/3) (Chlamydophila abortus), this protein is Putative pre-16S rRNA nuclease.